The chain runs to 593 residues: Auxin response factor 12 (593 aa).

A DNA-binding region (TF-B3) is located at residues Phe-126–Arg-228. In terms of domain architecture, PB1 spans Arg-511 to Arg-592.

This sequence belongs to the ARF family. Homodimers and heterodimers.

The protein resides in the nucleus. Its function is as follows. Auxin response factors (ARFs) are transcriptional factors that bind specifically to the DNA sequence 5'-TGTCTC-3' found in the auxin-responsive promoter elements (AuxREs). Could act as transcriptional activator or repressor. Formation of heterodimers with Aux/IAA proteins may alter their ability to modulate early auxin response genes expression. This Arabidopsis thaliana (Mouse-ear cress) protein is Auxin response factor 12 (ARF12).